The primary structure comprises 316 residues: Transaldolase (316 aa).

K132 acts as the Schiff-base intermediate with substrate in catalysis.

The protein belongs to the transaldolase family. Type 1 subfamily.

The protein resides in the cytoplasm. It catalyses the reaction D-sedoheptulose 7-phosphate + D-glyceraldehyde 3-phosphate = D-erythrose 4-phosphate + beta-D-fructose 6-phosphate. The protein operates within carbohydrate degradation; pentose phosphate pathway; D-glyceraldehyde 3-phosphate and beta-D-fructose 6-phosphate from D-ribose 5-phosphate and D-xylulose 5-phosphate (non-oxidative stage): step 2/3. Its function is as follows. Transaldolase is important for the balance of metabolites in the pentose-phosphate pathway. In Vibrio cholerae serotype O1 (strain ATCC 39315 / El Tor Inaba N16961), this protein is Transaldolase.